The sequence spans 210 residues: Proteasome subunit beta (210 aa).

The propeptide at 1–10 (MKELDQLTKG) is removed in mature form; by autocatalysis. Residue threonine 11 is the Nucleophile of the active site.

Belongs to the peptidase T1B family. The 20S proteasome core is composed of 14 alpha and 14 beta subunits that assemble into four stacked heptameric rings, resulting in a barrel-shaped structure. The two inner rings, each composed of seven catalytic beta subunits, are sandwiched by two outer rings, each composed of seven alpha subunits. The catalytic chamber with the active sites is on the inside of the barrel. Has a gated structure, the ends of the cylinder being occluded by the N-termini of the alpha-subunits. Is capped at one or both ends by the proteasome regulatory ATPase, PAN.

Its subcellular location is the cytoplasm. It catalyses the reaction Cleavage of peptide bonds with very broad specificity.. Its activity is regulated as follows. The formation of the proteasomal ATPase PAN-20S proteasome complex, via the docking of the C-termini of PAN into the intersubunit pockets in the alpha-rings, triggers opening of the gate for substrate entry. Interconversion between the open-gate and close-gate conformations leads to a dynamic regulation of the 20S proteasome proteolysis activity. Component of the proteasome core, a large protease complex with broad specificity involved in protein degradation. The protein is Proteasome subunit beta of Methanopyrus kandleri (strain AV19 / DSM 6324 / JCM 9639 / NBRC 100938).